Here is a 285-residue protein sequence, read N- to C-terminus: Vacuolar protein sorting-associated protein 37B (285 aa).

Residues 50 to 170 form an interaction with IST1 region; the sequence is ASNRSLAEGN…ELVLKGQRHP (121 aa). The VPS37 C-terminal domain occupies 84–173; the sequence is FEAYQIKKTK…LKGQRHPQAG (90 aa). Disordered regions lie at residues 167–215 and 242–285; these read QRHP…PPVP and PLPP…FILQ. 2 stretches are compositionally biased toward pro residues: residues 173–184 and 206–215; these read GAPPPPRVPEPS and RIPPPPPPVP. Residues 250 to 259 show a composition bias toward polar residues; sequence PSQQGFSAQL. Positions 262 to 275 are enriched in pro residues; it reads PYPPALPQRPPPRM. The segment covering 276–285 has biased composition (low complexity); that stretch reads APHQPGFILQ.

It belongs to the VPS37 family. In terms of assembly, component of the ESCRT-I complex (endosomal sorting complex required for transport I) which consists of TSG101, VPS28, a VPS37 protein (VPS37A to -D) and MVB12A or MVB12B in a 1:1:1:1 stoichiometry. Interacts with TSG101, VPS28, MVB12A and MVB12B. Component of the ESCRT-I complex (endosomal sorting complex required for transport I) which consists of TSG101, VPS28, a VPS37 protein (VPS37A to -D) and UBAP1 in a 1:1:1:1 stoichiometry. Interacts with CEP55. Interacts with IST1.

Its subcellular location is the late endosome membrane. In terms of biological role, component of the ESCRT-I complex, a regulator of vesicular trafficking process. Required for the sorting of endocytic ubiquitinated cargos into multivesicular bodies. May be involved in cell growth and differentiation. The polypeptide is Vacuolar protein sorting-associated protein 37B (Vps37b) (Mus musculus (Mouse)).